The following is a 649-amino-acid chain: Echinoderm microtubule-associated protein-like 2 (649 aa).

Positions 10-649 are tandem atypical propeller in EMLs; the sequence is KEVIFSMEEG…DTSVLQWRVA (640 aa). 12 WD repeats span residues 56 to 93, 97 to 144, 151 to 192, 195 to 234, 241 to 280, 285 to 323, 369 to 406, 410 to 447, 452 to 489, 495 to 535, 564 to 602, and 609 to 648; these read KLDW…LYSV, RQRH…VWDS, HVLG…VWDW, ESKV…FWSL, KRQG…VWGK, ITQE…LWGS, FSLL…LWSS, QPVW…LLDT, LVAI…VYTV, KVSR…YWDA, FGIW…LFSY, and ALSH…QWRV.

Belongs to the WD repeat EMAP family. Interacts with GRID2 and may also interact with GRID1. Interacts with EML3. Binds unpolymerized tubulins via its WD repeat region. Widely expressed in both brain and peripheral tissues, including brainstem and enrichment in the postsynaptic density, PSD.

It localises to the cytoplasm. It is found in the cytoskeleton. The protein localises to the spindle. Its function is as follows. Tubulin binding protein that inhibits microtubule nucleation and growth, resulting in shorter microtubules. The polypeptide is Echinoderm microtubule-associated protein-like 2 (Eml2) (Rattus norvegicus (Rat)).